The following is a 1181-amino-acid chain: Putative type II restriction enzyme and methyltransferase RM.MjaORFECS2P (1181 aa).

In the C-terminal section; belongs to the N(4)/N(6)-methyltransferase family.

The enzyme catalyses Endonucleolytic cleavage of DNA to give specific double-stranded fragments with terminal 5'-phosphates.. The catalysed reaction is a 2'-deoxyadenosine in DNA + S-adenosyl-L-methionine = an N(6)-methyl-2'-deoxyadenosine in DNA + S-adenosyl-L-homocysteine + H(+). In terms of biological role, probably a G subtype restriction enzyme that recognizes an undetermined sequence and cleaves at an undetermined site. Probably also acts as an alpha subtype methylase, presumably on the same sequence. The protein is Putative type II restriction enzyme and methyltransferase RM.MjaORFECS2P of Methanocaldococcus jannaschii (strain ATCC 43067 / DSM 2661 / JAL-1 / JCM 10045 / NBRC 100440) (Methanococcus jannaschii).